The sequence spans 342 residues: Galactose mutarotase (342 aa).

Serine 14 carries the post-translational modification Phosphoserine. Beta-D-galactose-binding positions include 81 to 82 (NR) and histidine 107. Serine 124 bears the Phosphoserine mark. Histidine 176 (proton donor) is an active-site residue. Beta-D-galactose is bound by residues 176–178 (HSY), aspartate 243, glutamine 279, and glutamate 307. The active-site Proton acceptor is glutamate 307.

The protein belongs to the aldose epimerase family. In terms of assembly, monomer.

The protein resides in the cytoplasm. It carries out the reaction alpha-D-galactose = beta-D-galactose. The catalysed reaction is alpha-D-glucose = beta-D-glucose. Its pathway is carbohydrate metabolism; hexose metabolism. It functions in the pathway carbohydrate metabolism; galactose metabolism. In terms of biological role, mutarotase that catalyzes the interconversion of beta-D-galactose and alpha-D-galactose during galactose metabolism. Beta-D-galactose is metabolized in the liver into glucose 1-phosphate, the primary metabolic fuel, by the action of four enzymes that constitute the Leloir pathway: GALM, GALK1 (galactokinase), GALT (galactose-1-phosphate uridylyltransferase) and GALE (UDP-galactose-4'-epimerase). Involved in the maintenance of the equilibrium between the beta- and alpha-anomers of galactose, therefore ensuring a sufficient supply of the alpha-anomer for GALK1. Also active on D-glucose although shows a preference for galactose over glucose. This is Galactose mutarotase (Galm) from Rattus norvegicus (Rat).